A 56-amino-acid polypeptide reads, in one-letter code: Small ribosomal subunit protein uS14 (56 aa).

Zn(2+)-binding residues include Cys-21, Cys-24, Cys-39, and Cys-42.

This sequence belongs to the universal ribosomal protein uS14 family. As to quaternary structure, component of the 40S small ribosomal subunit. Requires Zn(2+) as cofactor.

It is found in the cytoplasm. Its subcellular location is the cytosol. The protein localises to the rough endoplasmic reticulum. This chain is Small ribosomal subunit protein uS14 (RpS29), found in Plutella xylostella (Diamondback moth).